The following is a 417-amino-acid chain: Probable secreted beta-glucosidase PSU1 (417 aa).

Positions 1-18 are cleaved as a signal peptide; sequence MRFFETLALALLTTGALA.

This sequence belongs to the SUN family.

The protein localises to the secreted. It is found in the cell wall. Its function is as follows. Involved in cell wall synthesis. May be required for the activation of 1,3-beta-glucan synthase. This chain is Probable secreted beta-glucosidase PSU1 (psu1), found in Schizosaccharomyces pombe (strain 972 / ATCC 24843) (Fission yeast).